The primary structure comprises 283 residues: 4-diphosphocytidyl-2-C-methyl-D-erythritol kinase (283 aa).

Lysine 10 is a catalytic residue. 99 to 109 contributes to the ATP binding site; the sequence is PMGGGLGGGSS. Residue aspartate 141 is part of the active site.

Belongs to the GHMP kinase family. IspE subfamily. Homodimer.

It catalyses the reaction 4-CDP-2-C-methyl-D-erythritol + ATP = 4-CDP-2-C-methyl-D-erythritol 2-phosphate + ADP + H(+). It functions in the pathway isoprenoid biosynthesis; isopentenyl diphosphate biosynthesis via DXP pathway; isopentenyl diphosphate from 1-deoxy-D-xylulose 5-phosphate: step 3/6. Catalyzes the phosphorylation of the position 2 hydroxy group of 4-diphosphocytidyl-2C-methyl-D-erythritol. In Citrobacter koseri (strain ATCC BAA-895 / CDC 4225-83 / SGSC4696), this protein is 4-diphosphocytidyl-2-C-methyl-D-erythritol kinase.